Consider the following 694-residue polypeptide: E3 ubiquitin-protein ligase SPL11 (694 aa).

Residues 1–12 show a composition bias toward acidic residues; sequence MAGDRAEEEEGE. Disordered stretches follow at residues 1–21 and 343–363; these read MAGD…ARAA and NGME…ACSS. Residues 272-346 enclose the U-box domain; it reads TIPDEFRCPI…SQWCETNGME (75 aa). Residues 350 to 363 show a composition bias toward polar residues; sequence RSTQPNKPTPACSS. ARM repeat units follow at residues 398–438, 439–479, 480–520, 521–561, 562–602, and 603–650; these read NANN…NLSI, HEDN…SLSV, IDEY…NLCI, YQGN…ILSS, HPEG…HLCS, and GEHH…FLVQ. The segment covering 650 to 667 has biased composition (low complexity); the sequence is QQQEEQESQSQASAQVPP. The disordered stretch occupies residues 650–694; the sequence is QQQEEQESQSQASAQVPPQATPEQVPENDIPEQLDSPASQYPMVV.

As to quaternary structure, interacts with SPIN1 (via N-terminus). Highly expressed in leaf, at intermediate levels in shoot and weakly in root.

The protein localises to the nucleus. It localises to the cytoplasm. The enzyme catalyses S-ubiquitinyl-[E2 ubiquitin-conjugating enzyme]-L-cysteine + [acceptor protein]-L-lysine = [E2 ubiquitin-conjugating enzyme]-L-cysteine + N(6)-ubiquitinyl-[acceptor protein]-L-lysine.. The protein operates within protein modification; protein ubiquitination. Functionally, E3 ubiquitin-protein ligase that negatively regulates programmed cell death and disease resistance. Participates in flowering time control by mediating ubiquitination and subsequent proteasomal degradation of SPIN1. This is E3 ubiquitin-protein ligase SPL11 (SPL11) from Oryza sativa subsp. japonica (Rice).